A 260-amino-acid chain; its full sequence is Acetylglutamate kinase (260 aa).

Residues 41 to 42 (GG), Arg63, and Asn156 each bind substrate.

This sequence belongs to the acetylglutamate kinase family. ArgB subfamily.

The protein localises to the cytoplasm. The enzyme catalyses N-acetyl-L-glutamate + ATP = N-acetyl-L-glutamyl 5-phosphate + ADP. The protein operates within amino-acid biosynthesis; L-arginine biosynthesis; N(2)-acetyl-L-ornithine from L-glutamate: step 2/4. In terms of biological role, catalyzes the ATP-dependent phosphorylation of N-acetyl-L-glutamate. The sequence is that of Acetylglutamate kinase from Halalkalibacterium halodurans (strain ATCC BAA-125 / DSM 18197 / FERM 7344 / JCM 9153 / C-125) (Bacillus halodurans).